The following is a 296-amino-acid chain: Peroxidase P7 (296 aa).

Glutamine 1 carries the pyrrolidone carboxylic acid modification. Disulfide bonds link cysteine 11–cysteine 91, cysteine 44–cysteine 49, cysteine 97–cysteine 292, and cysteine 176–cysteine 201. Histidine 42 serves as the catalytic Proton acceptor. Residues aspartate 43, valine 46, glycine 48, aspartate 50, and serine 52 each coordinate Ca(2+). A substrate-binding site is contributed by proline 139. Histidine 169 provides a ligand contact to heme b. Residue threonine 170 participates in Ca(2+) binding. The N-linked (GlcNAc...) asparagine glycan is linked to asparagine 185. Ca(2+)-binding residues include aspartate 216, serine 219, and aspartate 224.

It belongs to the peroxidase family. Classical plant (class III) peroxidase subfamily. Ca(2+) serves as cofactor. Requires heme b as cofactor.

It carries out the reaction 2 a phenolic donor + H2O2 = 2 a phenolic radical donor + 2 H2O. Functionally, removal of H(2)O(2), oxidation of toxic reductants, biosynthesis and degradation of lignin, suberization, auxin catabolism, response to environmental stresses such as wounding, pathogen attack and oxidative stress. These functions might be dependent on each isozyme/isoform in each plant tissue. This is Peroxidase P7 from Brassica rapa subsp. rapa (Turnip).